Here is a 356-residue protein sequence, read N- to C-terminus: Arginine kinase Scy s 2 (356 aa).

The region spanning 9-91 (KLEEGFKKLE…FDPIIEDYHK (83 aa)) is the Phosphagen kinase N-terminal domain. L-arginine is bound at residue 64–68 (GVGVY). Residues 119–356 (FVISTRVRCG…LELIKMEKEM (238 aa)) enclose the Phosphagen kinase C-terminal domain. Residues 122–126 (STRVR) and His185 each bind ATP. Glu225 contacts L-arginine. Arg229 is a binding site for ATP. Cys271 contacts L-arginine. Residues 280-284 (RASVH) and 309-314 (RGTRGE) contribute to the ATP site. Glu314 contacts L-arginine.

It belongs to the ATP:guanido phosphotransferase family. As to expression, muscle (at protein level).

The catalysed reaction is L-arginine + ATP = N(omega)-phospho-L-arginine + ADP + H(+). Functionally, catalyzes the reversible transfer of high energy ATP gamma-phosphate group to L-arginine. This Scylla serrata (Mud crab) protein is Arginine kinase Scy s 2.